Consider the following 783-residue polypeptide: Rho GTPase-activating protein gacR (783 aa).

Residues 138-188 (AKNRFDKARLSFDEASEQFKQLRKKQNNINNEKLLEAEEDLDYATQQFSDI) are a coiled coil. Positions 262 to 299 (QFEQTNSSRTISLPPPPPPKPTSSTPSSSPSPSPSSSI) are disordered. Over residues 283-299 (TSSTPSSSPSPSPSSSI) the composition is skewed to low complexity. A Rho-GAP domain is found at 319–509 (MALSTITERE…FIISNFNNIF (191 aa)). A compositionally biased stretch (gly residues) spans 527 to 539 (GSSGGGGGGGSSG). Residues 527 to 745 (GSSGGGGGGG…TTNSRPLSNS (219 aa)) form a disordered region. Low complexity-rich tracts occupy residues 568-589 (SVNT…ASSA), 599-630 (PSSS…NINP), 641-651 (PKKISSSSNSL), and 661-698 (SIPE…RSST). The segment covering 706 to 738 (NRVSMYLQNSNTGVPLPSQKPQRVISNNNTTTN) has biased composition (polar residues).

Its subcellular location is the cytoplasm. Functionally, rho GTPase-activating protein involved in the signal transduction pathway. This Dictyostelium discoideum (Social amoeba) protein is Rho GTPase-activating protein gacR (gacR).